Reading from the N-terminus, the 50-residue chain is Large ribosomal subunit protein bL33B (50 aa).

Belongs to the bacterial ribosomal protein bL33 family.

This Streptococcus pyogenes serotype M1 protein is Large ribosomal subunit protein bL33B.